Consider the following 455-residue polypeptide: GTPase Der (455 aa).

2 consecutive EngA-type G domains span residues 4–169 (PVVA…PPKD) and 178–353 (IQMA…EQHR). Residues 10–17 (GRPNVGKS), 57–61 (DTGGL), 120–123 (NKCE), 184–191 (GRPNVGKS), 231–235 (DTAGI), and 296–299 (NKWD) contribute to the GTP site. A KH-like domain is found at 354–439 (RRVSTSVVNE…PVKLYWRGKQ (86 aa)).

This sequence belongs to the TRAFAC class TrmE-Era-EngA-EngB-Septin-like GTPase superfamily. EngA (Der) GTPase family. As to quaternary structure, associates with the 50S ribosomal subunit.

Functionally, GTPase that plays an essential role in the late steps of ribosome biogenesis. This is GTPase Der from Parasynechococcus marenigrum (strain WH8102).